We begin with the raw amino-acid sequence, 102 residues long: Small ribosomal subunit protein uS10 (102 aa).

Belongs to the universal ribosomal protein uS10 family. As to quaternary structure, part of the 30S ribosomal subunit.

Involved in the binding of tRNA to the ribosomes. The chain is Small ribosomal subunit protein uS10 from Acidithiobacillus ferrooxidans (strain ATCC 53993 / BNL-5-31) (Leptospirillum ferrooxidans (ATCC 53993)).